A 139-amino-acid chain; its full sequence is Autophagy-related protein 31 (139 aa).

Belongs to the ATG31 family. Forms a stable complex with ATG17 and ATG29. Interacts directly with ATG29. The ATG17-ATG29-ATG31 complex interacts with the ATG1-ATG13 complex. Note=The interaction with the ATG1-ATG13 complex is induced by starvation.

Its subcellular location is the preautophagosomal structure. Plays a role in starvation-induced autophagy. Involved in mitophagy. Functions with ATG17 and ATG29 at the preautophagosomal structure (PAS) in order to form normal autophagosomes under starvation conditions. The protein is Autophagy-related protein 31 of Kluyveromyces marxianus (strain DMKU3-1042 / BCC 29191 / NBRC 104275) (Yeast).